Reading from the N-terminus, the 446-residue chain is MGHGLSCSRDTDEYDLFRAAQLGDIHALSALLAADPALARRATVYDRFTALHIAAANGRLQVLSMLLDRDGDVDVLSRKKQTPLMVAAMRGNTECVVRLLRGGANVLTFDSPRARTCLHHAAYYGHAECLQAILGAAAQAQGPVAASWGFARFVNVRDERGATPLHLAARHARASCVRLLLDKGAIVSAPTAVYGFPGSTALHLAARAGSMECIRELLAWGADRLQRDSAGRIAYAVAMRRGHRACAALLNPAAAEPIVWPSPLKFIGELEADAKALLEAALMEANREREKRILHGSDINIKGGDEEEESEDEEEACNICFEQACSMEVKECGHQMCAACTLAICCHSKPNPKTLLLHPPACPFCRTTISRLVVATTNSNKTNSRRRSRSRSSSFKGGLSSAMGSFSRIGRGSGRLVVDGSSVGELADKPDHDFSSVAAAAAICDT.

ANK repeat units lie at residues 46-75, 79-108, 113-142, 160-189, and 197-227; these read DRFTALHIAAANGRLQVLSMLLDRDGDVDV, KKQTPLMVAAMRGNTECVVRLLRGGANVLT, RARTCLHHAAYYGHAECLQAILGAAAQAQG, RGATPLHLAARHARASCVRLLLDKGAIVSA, and PGSTALHLAARAGSMECIRELLAWGADRLQR. An RING-type zinc finger spans residues 317 to 366; it reads CNICFEQACSMEVKECGHQMCAACTLAICCHSKPNPKTLLLHPPACPFCR. Positions 376–401 are disordered; that stretch reads TTNSNKTNSRRRSRSRSSSFKGGLSS.

It carries out the reaction S-ubiquitinyl-[E2 ubiquitin-conjugating enzyme]-L-cysteine + [acceptor protein]-L-lysine = [E2 ubiquitin-conjugating enzyme]-L-cysteine + N(6)-ubiquitinyl-[acceptor protein]-L-lysine.. The protein operates within protein modification; protein ubiquitination. The protein is Probable E3 ubiquitin-protein ligase XBOS31 (XBOS31) of Oryza sativa subsp. japonica (Rice).